We begin with the raw amino-acid sequence, 1018 residues long: Antigenic heat-stable 120 kDa protein (1018 aa).

Residues 1-11 are compositionally biased toward polar residues; the sequence is MSKDGNLNTSE. 3 disordered regions span residues 1–82, 355–402, and 995–1018; these read MSKD…DPIT, GQSK…MPQS, and RDSI…PPQR. A compositionally biased stretch (basic and acidic residues) spans 19–34; the sequence is EYTEEQKQTLEQEQKE. Positions 53–68 are enriched in low complexity; the sequence is TSASSAQSTPSTSALS. 4 stretches are compositionally biased toward polar residues: residues 69 to 80, 355 to 380, 387 to 402, and 996 to 1007; these read GNISPDSQTSDP, GQSK…QYKQ, PTNQ…MPQS, and DSIQSENLNKST. The span at 1009 to 1018 shows a compositional bias: basic and acidic residues; that stretch reads IKRESSPPQR.

It localises to the cytoplasm. The chain is Antigenic heat-stable 120 kDa protein (sca4) from Rickettsia japonica (strain ATCC VR-1363 / YH).